Consider the following 686-residue polypeptide: Probable metal-nicotianamine transporter YSL4 (686 aa).

14 consecutive transmembrane segments (helical) span residues 27-47 (WLVT…FCFV), 53-73 (MMTG…FFLL), 96-116 (MFLI…GFAT), 151-171 (FFLI…IMII), 203-223 (VMTI…QWFY), 264-284 (IVNF…YPYL), 308-328 (VFIS…ILVT), 373-393 (IPMF…MVAM), 405-425 (VGVL…ATGL), 441-461 (IFAA…VSGI), 488-508 (AMIA…PCIF), 554-574 (CVEL…LVLV), 596-616 (FFAG…LLLW), and 629-649 (AAVA…SALL).

Belongs to the YSL (TC 2.A.67.2) family.

It localises to the membrane. May be involved in the transport of nicotianamine-chelated metals. This is Probable metal-nicotianamine transporter YSL4 (YSL4) from Oryza sativa subsp. japonica (Rice).